The chain runs to 282 residues: Putative 23S rRNA (guanine-N(1)-)-methyltransferase YxjB (282 aa).

Residues C12, C15, C29, and H34 each contribute to the Zn(2+) site. Position 103–104 (E103–G104) interacts with S-adenosyl-L-methionine.

Belongs to the methyltransferase superfamily. RlmA family.

The polypeptide is Putative 23S rRNA (guanine-N(1)-)-methyltransferase YxjB (yxjB) (Bacillus subtilis (strain 168)).